We begin with the raw amino-acid sequence, 601 residues long: ATP-dependent lipid A-core flippase (601 aa).

4 helical membrane-spanning segments follow: residues Ile-27 to Leu-47, Leu-83 to Leu-103, Leu-174 to Val-194, and Pro-267 to Leu-287. Residues Leu-31 to Lys-322 enclose the ABC transmembrane type-1 domain. An ABC transporter domain is found at Leu-354–Met-590. Gly-388–Ser-395 lines the ATP pocket.

The protein belongs to the ABC transporter superfamily. Lipid exporter (TC 3.A.1.106) family. As to quaternary structure, homodimer.

It localises to the cell inner membrane. It carries out the reaction ATP + H2O + lipid A-core oligosaccharideSide 1 = ADP + phosphate + lipid A-core oligosaccharideSide 2.. Its function is as follows. Involved in lipopolysaccharide (LPS) biosynthesis. Translocates lipid A-core from the inner to the outer leaflet of the inner membrane. Transmembrane domains (TMD) form a pore in the inner membrane and the ATP-binding domain (NBD) is responsible for energy generation. The chain is ATP-dependent lipid A-core flippase from Pseudomonas fluorescens (strain ATCC BAA-477 / NRRL B-23932 / Pf-5).